The chain runs to 127 residues: MSDLKKFAEQLVNLTVKEVNELAAILKEEHGIEPAAAAPVVVAGGGAQGGDSKAAEEKTHFDVILKSAGASKLSVVKLVKDLTGLGLKEAKDLVDAAPKPIKEGAPKAEAESLKSKLEEAGAEVELK.

The tract at residues 98–127 (PKPIKEGAPKAEAESLKSKLEEAGAEVELK) is disordered.

The protein belongs to the bacterial ribosomal protein bL12 family. Homodimer. Part of the ribosomal stalk of the 50S ribosomal subunit. Forms a multimeric L10(L12)X complex, where L10 forms an elongated spine to which 2 to 4 L12 dimers bind in a sequential fashion. Binds GTP-bound translation factors.

Functionally, forms part of the ribosomal stalk which helps the ribosome interact with GTP-bound translation factors. Is thus essential for accurate translation. The chain is Large ribosomal subunit protein bL12 from Amoebophilus asiaticus (strain 5a2).